Consider the following 359-residue polypeptide: Molybdenum import ATP-binding protein ModC (359 aa).

The ABC transporter domain maps to 1 to 233 (MSGLTVSIRG…IDAESEGGGV (233 aa)). 32-39 (GHSGAGKT) provides a ligand contact to ATP. The Mop domain maps to 289–355 (AISIRNLLPV…VKAVSVDRAA (67 aa)).

This sequence belongs to the ABC transporter superfamily. Molybdate importer (TC 3.A.1.8) family. The complex is composed of two ATP-binding proteins (ModC), two transmembrane proteins (ModB) and a solute-binding protein (ModA).

The protein resides in the cell inner membrane. The catalysed reaction is molybdate(out) + ATP + H2O = molybdate(in) + ADP + phosphate + H(+). Its function is as follows. Part of the ABC transporter complex ModABC involved in molybdenum import. Responsible for energy coupling to the transport system. This is Molybdenum import ATP-binding protein ModC from Brucella melitensis biotype 1 (strain ATCC 23456 / CCUG 17765 / NCTC 10094 / 16M).